Here is a 365-residue protein sequence, read N- to C-terminus: Chloroplast protein FOR GROWTH AND FERTILITY 1 (365 aa).

Disordered regions lie at residues 1–30 and 62–90; these read MERL…LPRL and YTPI…PGFL. A chloroplast-targeting transit peptide spans 1–79; the sequence is MERLLQPSSS…TNNSFNGSPK (79 aa). 2 stretches are compositionally biased toward low complexity: residues 7–24 and 62–77; these read PSSS…SRTS and YTPI…FNGS. 7 helical membrane-spanning segments follow: residues 109–129, 139–159, 182–202, 218–238, 274–294, 301–321, and 345–365; these read VILI…PPAF, GWLT…LSGP, ALWG…FLLL, IVGL…SEIP, GVVH…LALP, AFLI…TAFI, and LVAI…FSLY.

In terms of tissue distribution, mostly expressed in leaves and flowers, to a lower extent, in stems, roots, floral bud, inflorescence and siliques, and, barely, in seedlings.

Its subcellular location is the plastid. The protein localises to the chloroplast membrane. It is found in the plastid membrane. In terms of biological role, together with CGF2, essential protein which supports female gametogenesis and embryogenesis, probably by securing local energy supply. The chain is Chloroplast protein FOR GROWTH AND FERTILITY 1 from Arabidopsis thaliana (Mouse-ear cress).